A 921-amino-acid polypeptide reads, in one-letter code: Protein translocase subunit SecA (921 aa).

Residues Q87, 105–109, and D516 contribute to the ATP site; that span reads GEGKT. Residues C905, C907, C916, and H917 each coordinate Zn(2+).

Belongs to the SecA family. In terms of assembly, monomer and homodimer. Part of the essential Sec protein translocation apparatus which comprises SecA, SecYEG and auxiliary proteins SecDF-YajC and YidC. Requires Zn(2+) as cofactor.

It is found in the cell inner membrane. The protein localises to the cytoplasm. It catalyses the reaction ATP + H2O + cellular proteinSide 1 = ADP + phosphate + cellular proteinSide 2.. Part of the Sec protein translocase complex. Interacts with the SecYEG preprotein conducting channel. Has a central role in coupling the hydrolysis of ATP to the transfer of proteins into and across the cell membrane, serving both as a receptor for the preprotein-SecB complex and as an ATP-driven molecular motor driving the stepwise translocation of polypeptide chains across the membrane. The polypeptide is Protein translocase subunit SecA (Albidiferax ferrireducens (strain ATCC BAA-621 / DSM 15236 / T118) (Rhodoferax ferrireducens)).